The primary structure comprises 320 residues: Cytochrome f (320 aa).

An N-terminal signal peptide occupies residues 1-35 (MQTRNTLSWIREEITRSISVSLMIYIITWASISSA). Heme is bound by residues tyrosine 36, cysteine 56, cysteine 59, and histidine 60. Residues 286 to 306 (VQGLLFFLGSVVLAQIFLVLK) traverse the membrane as a helical segment.

Belongs to the cytochrome f family. As to quaternary structure, the 4 large subunits of the cytochrome b6-f complex are cytochrome b6, subunit IV (17 kDa polypeptide, petD), cytochrome f and the Rieske protein, while the 4 small subunits are PetG, PetL, PetM and PetN. The complex functions as a dimer. Heme is required as a cofactor.

It localises to the plastid. Its subcellular location is the chloroplast thylakoid membrane. Component of the cytochrome b6-f complex, which mediates electron transfer between photosystem II (PSII) and photosystem I (PSI), cyclic electron flow around PSI, and state transitions. The sequence is that of Cytochrome f from Olimarabidopsis pumila (Dwarf rocket).